A 457-amino-acid chain; its full sequence is PE-PGRS family protein PE_PGRS18 (457 aa).

The 92-residue stretch at 1-92 (MSFVNVAPQL…SSTYAVAEAA (92 aa)) folds into the PE domain. NHL repeat units follow at residues 291-321 (FNDP…IDPV), 333-363 (NGPS…IDPN), 379-404 (GVAV…IDPA), and 419-447 (PTGV…ITGE).

Belongs to the mycobacterial PE family. PGRS subfamily.

It localises to the secreted. Its subcellular location is the cell wall. Enhances mycobacterial intracellular survival, probably via altering host macrophage cytokine profiling and attenuating the cell apoptosis. Could be required for host endothelial-cell invasion. Functionally, expression in Mycobacterium smegmatis, a nonpathogenic species naturally deficient in PE_PGRS genes, results in alteration of the production of host cytokines, including IL-6, IL-1beta, IL-10 and IL-12p40, as well as enhanced survival within macrophages largely via attenuating the apoptosis of macrophages. The polypeptide is PE-PGRS family protein PE_PGRS18 (Mycobacterium tuberculosis (strain ATCC 25618 / H37Rv)).